Consider the following 415-residue polypeptide: ATP-dependent Clp protease ATP-binding subunit ClpX (415 aa).

One can recognise a ClpX-type ZB domain in the interval 1–54 (MARNRMGGALICSFCNKPESSERFVVPGPGGIAICDRCVDLCESYIKSYKTVRP). Zn(2+) is bound by residues Cys12, Cys15, Cys35, and Cys38. ATP is bound at residue 117–124 (PTGSGKTL).

The protein belongs to the ClpX chaperone family. In terms of assembly, component of the ClpX-ClpP complex. Forms a hexameric ring that, in the presence of ATP, binds to fourteen ClpP subunits assembled into a disk-like structure with a central cavity, resembling the structure of eukaryotic proteasomes.

ATP-dependent specificity component of the Clp protease. It directs the protease to specific substrates. Can perform chaperone functions in the absence of ClpP. The sequence is that of ATP-dependent Clp protease ATP-binding subunit ClpX from Treponema denticola (strain ATCC 35405 / DSM 14222 / CIP 103919 / JCM 8153 / KCTC 15104).